The chain runs to 471 residues: Tryptophanase (471 aa).

Lys-270 is subject to N6-(pyridoxal phosphate)lysine.

The protein belongs to the beta-eliminating lyase family. Homotetramer. Pyridoxal 5'-phosphate serves as cofactor.

It carries out the reaction L-tryptophan + H2O = indole + pyruvate + NH4(+). It functions in the pathway amino-acid degradation; L-tryptophan degradation via pyruvate pathway; indole and pyruvate from L-tryptophan: step 1/1. The protein is Tryptophanase of Histophilus somni (strain 129Pt) (Haemophilus somnus).